A 556-amino-acid polypeptide reads, in one-letter code: Sesquiterpene synthase 2 (556 aa).

Positions 309, 313, 453, and 461 each coordinate Mg(2+). The DDXXD motif motif lies at D309–D313.

The protein belongs to the terpene synthase family. Tpsa subfamily. Requires Mg(2+) as cofactor. Mn(2+) serves as cofactor. As to expression, mostly expressed in roots and mature leaflets and, to a lower extent, in rachis and developing leaflets.

It catalyses the reaction (2E,6E)-farnesyl diphosphate = alpha-humulene + diphosphate. It carries out the reaction (2E,6E)-farnesyl diphosphate = alpha-selinene + diphosphate. The enzyme catalyses (2E,6E)-farnesyl diphosphate = delta-cadinene + diphosphate. The catalysed reaction is (2E,6E)-farnesyl diphosphate = (1S,2S,4R)-beta-elemene + diphosphate. It participates in secondary metabolite biosynthesis; terpenoid biosynthesis. Its function is as follows. Sesquiterpene synthase involved in the biosynthesis of volatile compounds known for their medicinal efficacy for treating enteritis, dysentery, itch and some cancers. Mediates the conversion of (2E,6E)-farnesyl diphosphate (FPP) into beta-elemene, alpha-humulene, delta-cadinene and alpha-selinene. The chain is Sesquiterpene synthase 2 from Toona sinensis (Chinese mahogany).